We begin with the raw amino-acid sequence, 181 residues long: RNA pyrophosphohydrolase (181 aa).

One can recognise a Nudix hydrolase domain in the interval 6 to 149 (GFRPNVGIIL…KRRVYTRALQ (144 aa)). The Nudix box motif lies at 38–59 (GGIKAQETPEEALFRELEEEVG). Positions 159-181 (GLPRQPPVGRPRRSAPPRGCRRA) are disordered. Positions 168–181 (RPRRSAPPRGCRRA) are enriched in basic residues.

Belongs to the Nudix hydrolase family. RppH subfamily. The cofactor is a divalent metal cation.

Its function is as follows. Accelerates the degradation of transcripts by removing pyrophosphate from the 5'-end of triphosphorylated RNA, leading to a more labile monophosphorylated state that can stimulate subsequent ribonuclease cleavage. This chain is RNA pyrophosphohydrolase, found in Alkalilimnicola ehrlichii (strain ATCC BAA-1101 / DSM 17681 / MLHE-1).